The following is a 611-amino-acid chain: Probable methyltransferase PMT19 (611 aa).

Residues Met1–Arg15 are Cytoplasmic-facing. A helical; Signal-anchor for type II membrane protein membrane pass occupies residues Leu16 to Lys36. Over Thr37 to Lys611 the chain is Lumenal. N-linked (GlcNAc...) asparagine glycans are attached at residues Asn68, Asn97, Asn289, Asn408, Asn411, and Asn587.

It belongs to the methyltransferase superfamily.

The protein resides in the endoplasmic reticulum membrane. The polypeptide is Probable methyltransferase PMT19 (Arabidopsis thaliana (Mouse-ear cress)).